A 424-amino-acid polypeptide reads, in one-letter code: Dapdiamide A synthase (424 aa).

The ATP-grasp domain occupies 120–318 (QEQLALKGVA…QISKLAQAVL (199 aa)). 147–209 (AGHAHWPVVL…QEFLAGEEFV (63 aa)) contacts ATP. The Mg(2+) site is built by Glu-275 and Glu-287.

Requires Mg(2+) as cofactor. Mn(2+) serves as cofactor.

It carries out the reaction 3-[[[(2R,3R)-3-carboxyoxiran-2-yl]carbonyl]amino]-L-alanine + L-valine + ATP = dapdiamide E + ADP + phosphate + H(+). The catalysed reaction is N(3)-fumaramoyl-(S)-2,3-diaminopropanoate + L-valine + ATP = dapdiamide A + ADP + phosphate + H(+). The enzyme catalyses N(3)-fumaramoyl-(S)-2,3-diaminopropanoate + L-isoleucine + ATP = dapdiamide B + ADP + phosphate + H(+). It catalyses the reaction N(3)-fumaramoyl-(S)-2,3-diaminopropanoate + L-leucine + ATP = dapdiamide C + ADP + phosphate + H(+). It functions in the pathway antibiotic biosynthesis. Involved in dapdiamide antibiotics biosynthesis. Ligates N-beta-fumaramoyl-DAP and valine, isoleucine or leucine to form dapdiamides A, B or C, respectively. Also ligates N-beta-epoxysuccinamoyl-DAP and valine to form dapdiamide E. This chain is Dapdiamide A synthase, found in Enterobacter agglomerans (Erwinia herbicola).